A 365-amino-acid polypeptide reads, in one-letter code: Zinc finger TRAF-type-containing protein 1-A (365 aa).

Positions 1–56 (MSEEREAPGPLASSSAGLGAEVGQEEVPGGAGPARLLLLPSDSDGPPKKRLRSEAE) are disordered. An RING-type; degenerate zinc finger spans residues 72-117 (CTVCLDLPKASVYQCTNGHLMCAGCFIHLLADSRLKEEQATCPNCR). The TRAF-type zinc-finger motif lies at 113-186 (CPNCRCEISK…PWEGPYHELT (74 aa)).

The protein belongs to the ZFTRAF1 family.

It localises to the cytoplasm. This chain is Zinc finger TRAF-type-containing protein 1-A, found in Xenopus laevis (African clawed frog).